A 187-amino-acid chain; its full sequence is ATP synthase subunit b, chloroplastic (187 aa).

Residues 34–56 (LINLAAVIGLLFYSGRSFLTNLL) traverse the membrane as a helical segment.

The protein belongs to the ATPase B chain family. F-type ATPases have 2 components, F(1) - the catalytic core - and F(0) - the membrane proton channel. F(1) has five subunits: alpha(3), beta(3), gamma(1), delta(1), epsilon(1). F(0) has four main subunits: a(1), b(1), b'(1) and c(10-14). The alpha and beta chains form an alternating ring which encloses part of the gamma chain. F(1) is attached to F(0) by a central stalk formed by the gamma and epsilon chains, while a peripheral stalk is formed by the delta, b and b' chains.

The protein localises to the plastid. It localises to the chloroplast thylakoid membrane. F(1)F(0) ATP synthase produces ATP from ADP in the presence of a proton or sodium gradient. F-type ATPases consist of two structural domains, F(1) containing the extramembraneous catalytic core and F(0) containing the membrane proton channel, linked together by a central stalk and a peripheral stalk. During catalysis, ATP synthesis in the catalytic domain of F(1) is coupled via a rotary mechanism of the central stalk subunits to proton translocation. Its function is as follows. Component of the F(0) channel, it forms part of the peripheral stalk, linking F(1) to F(0). This chain is ATP synthase subunit b, chloroplastic, found in Chlorokybus atmophyticus (Soil alga).